A 358-amino-acid polypeptide reads, in one-letter code: Hydroxyproline O-arabinosyltransferase 3 (358 aa).

A helical; Signal-anchor transmembrane segment spans residues L8–V28.

As to expression, ubiquitous.

Its subcellular location is the golgi apparatus. The protein resides in the cis-Golgi network membrane. It carries out the reaction trans-4-hydroxy-L-prolyl-[protein] + UDP-beta-L-arabinofuranose = O-(beta-L-arabinofuranosyl)-trans-4-hydroxy-L-prolyl-[protein] + UDP + H(+). In terms of biological role, glycosyltransferase involved in the O-arabinosylation of several proteins including extensins and small signaling peptides. Catalyzes the transfer of the initial L-arabinose to the hydroxyl group of Hyp residues. Contributes redundantly with HPAT1 and HPAT2 to arabinosylation of EXT3, but main contributor to arabinosylation of CLE peptides. In Arabidopsis thaliana (Mouse-ear cress), this protein is Hydroxyproline O-arabinosyltransferase 3.